We begin with the raw amino-acid sequence, 75 residues long: uncharacterized protein (75 aa).

This is an uncharacterized protein from Bacillus subtilis (strain 168).